Consider the following 264-residue polypeptide: Late embryogenesis abundant protein D-34 (264 aa).

Over residues 1–16 (MSQGQPRRPQQPAGQG) the composition is skewed to low complexity. The tract at residues 1–23 (MSQGQPRRPQQPAGQGENQEPIK) is disordered. 3 consecutive SMP domains span residues 22–76 (IKYG…RNEQ), 138–194 (ITIG…AHNA), and 203–261 (IKLN…LNEN).

It belongs to the LEA type SMP family.

Its function is as follows. LEA proteins are late embryonic proteins abundant in higher plant seed embryos. There are two subsets of LEA proteins (5a and 5b), the first ones are expressed when the cotyledon weight reach 80 mg and the second set are expressed above 100 mg. The function of those proteins is not known. This chain is Late embryogenesis abundant protein D-34, found in Gossypium hirsutum (Upland cotton).